The chain runs to 460 residues: Receptor-like cytosolic serine/threonine-protein kinase RBK2 (460 aa).

Positions 1–67 (MNSASAHDLR…DADTDVQCKN (67 aa)) are disordered. Over residues 7 to 23 (HDLRLLEVDKEKQDPKS) the composition is skewed to basic and acidic residues. One can recognise a Protein kinase domain in the interval 143 to 415 (FSPENIIGRG…VELLLGHEDV (273 aa)). Residues 149–157 (IGRGGYADV) and K171 contribute to the ATP site. D267 acts as the Proton acceptor in catalysis. T307 is modified (phosphothreonine). Y315 bears the Phosphotyrosine mark.

This sequence belongs to the protein kinase superfamily. Ser/Thr protein kinase family. In terms of assembly, interacts with ARAC5 and ARAC10.

It is found in the cytoplasm. The catalysed reaction is L-seryl-[protein] + ATP = O-phospho-L-seryl-[protein] + ADP + H(+). The enzyme catalyses L-threonyl-[protein] + ATP = O-phospho-L-threonyl-[protein] + ADP + H(+). This is Receptor-like cytosolic serine/threonine-protein kinase RBK2 (RBK2) from Arabidopsis thaliana (Mouse-ear cress).